We begin with the raw amino-acid sequence, 284 residues long: Protein phosphatase 1 regulatory subunit 3B (284 aa).

The PP1-binding motif motif lies at 61–64; it reads RVSF. Residues 124-232 enclose the CBM21 domain; sequence RNRLQTNHVC…SNKGKNYRIT (109 aa). Residue Ser260 is modified to Phosphoserine.

As to quaternary structure, interacts with glycogen, PPP1CC catalytic subunit of PP1 and PYGL. Associates with glycogen particles. Forms complexes with debranching enzyme, glycogen phosphorylase, glycogen synthase and phosphorylase kinase which is necessary for its regulation of PP1 activity. Highly expressed in liver (at protein level). Expressed predominantly in liver. Expressed moderately in heart. Expressed weakly in prostate, stomach, thyroid, lung, kidney, spleen and skeletal muscle.

Functionally, acts as a glycogen-targeting subunit for phosphatase PP1. Facilitates interaction of the PP1 with enzymes of the glycogen metabolism and regulates its activity. Suppresses the rate at which PP1 dephosphorylates (inactivates) glycogen phosphorylase and enhances the rate at which it activates glycogen synthase and therefore limits glycogen breakdown. Its activity is inhibited by PYGL, resulting in inhibition of the glycogen synthase and glycogen phosphorylase phosphatase activities of PP1. Dramatically increases basal and insulin-stimulated glycogen synthesis upon overexpression in hepatocytes. In Mus musculus (Mouse), this protein is Protein phosphatase 1 regulatory subunit 3B (Ppp1r3b).